We begin with the raw amino-acid sequence, 444 residues long: ATP-dependent protease ATPase subunit HslU (444 aa).

ATP is bound by residues isoleucine 18, glycine 60–glutamate 65, aspartate 256, glutamate 322, and arginine 394.

Belongs to the ClpX chaperone family. HslU subfamily. As to quaternary structure, a double ring-shaped homohexamer of HslV is capped on each side by a ring-shaped HslU homohexamer. The assembly of the HslU/HslV complex is dependent on binding of ATP.

Its subcellular location is the cytoplasm. ATPase subunit of a proteasome-like degradation complex; this subunit has chaperone activity. The binding of ATP and its subsequent hydrolysis by HslU are essential for unfolding of protein substrates subsequently hydrolyzed by HslV. HslU recognizes the N-terminal part of its protein substrates and unfolds these before they are guided to HslV for hydrolysis. The polypeptide is ATP-dependent protease ATPase subunit HslU (Buchnera aphidicola subsp. Cinara cedri (strain Cc)).